A 360-amino-acid chain; its full sequence is C-C chemokine receptor-like 2 (360 aa).

Over Met1–Gln42 the chain is Extracellular. Residue Asn3 is glycosylated (N-linked (GlcNAc...) asparagine). Residues Phe43–Val63 traverse the membrane as a helical segment. The Cytoplasmic segment spans residues Lys64–Asn73. Residues Ile74–Ala94 traverse the membrane as a helical segment. Over His95–Lys109 the chain is Extracellular. Asn105 is a glycosylation site (N-linked (GlcNAc...) asparagine). Residues Cys108 and Cys185 are joined by a disulfide bond. The chain crosses the membrane as a helical span at residues Val110–Leu130. Residues Val131–Arg141 lie on the Cytoplasmic side of the membrane. The chain crosses the membrane as a helical span at residues Leu142–Met162. Topologically, residues Ala163–Tyr202 are extracellular. Residues Val203–Cys223 traverse the membrane as a helical segment. Over Cys224–Pro243 the chain is Cytoplasmic. A helical membrane pass occupies residues Ala244–Leu264. Residues Ser265–Ser285 are Extracellular-facing. A helical membrane pass occupies residues Val286 to Leu307. Topologically, residues Asp308–Ile360 are cytoplasmic.

The protein belongs to the G-protein coupled receptor 1 family. In terms of tissue distribution, expressed in macrophages, astrocytes, in glial cells. Constitutively expressed by mast cells. Detected in bronchial epithelium in OVA-induced airway inflammation. Up-regulated during dendritic cell (DC) maturation.

The protein localises to the cell membrane. Receptor for CCL19 and chemerin/RARRES2. Does not appear to be a signaling receptor, but may have a role in modulating chemokine-triggered immune responses by capturing and internalizing CCL19 or by presenting RARRES2 ligand to CMKLR1, a functional signaling receptor. Plays a critical role for the development of Th2 responses. This Mus musculus (Mouse) protein is C-C chemokine receptor-like 2 (Ccrl2).